Here is a 143-residue protein sequence, read N- to C-terminus: MAKKISGYIKLQVPAGTANPSPPLGPALGQRGVNIMEFCKAFNAATDGLEKGTPTPTIITVYADKSFSFVTKTPPATYLIKKAANLKSGSKEPGKISGGKIARSKLAEIAEIKMKDLNANDIEQATKIIEGSARSMGLEVTEG.

It belongs to the universal ribosomal protein uL11 family. As to quaternary structure, part of the ribosomal stalk of the 50S ribosomal subunit. Interacts with L10 and the large rRNA to form the base of the stalk. L10 forms an elongated spine to which L12 dimers bind in a sequential fashion forming a multimeric L10(L12)X complex. One or more lysine residues are methylated.

In terms of biological role, forms part of the ribosomal stalk which helps the ribosome interact with GTP-bound translation factors. This Sphingopyxis alaskensis (strain DSM 13593 / LMG 18877 / RB2256) (Sphingomonas alaskensis) protein is Large ribosomal subunit protein uL11.